The sequence spans 248 residues: MARKLAAGNWKMNGVEADLAEVDALGEAVAAANCDVLLCPPATLIAPMAKRAGLMDLYVGGQTCHTAASGAHTGDVSAAMLADAGASHVILGHSERRADHGERSEDVAAQVTAAIDANLIAIICVGETEAERDANVTLNVVSSQLAGSIPTGATPAQIVVAYEPVWAIGTGRTPTLEQIAEVHDHIRSELAARRGSAANDIPLLYGGSVKPGNAAEIFAVSNVDGALVGGASLKASDFGGIIAALSAA.

9–11 (NWK) contributes to the substrate binding site. The active-site Electrophile is the His93. Glu163 (proton acceptor) is an active-site residue. Substrate-binding positions include Gly169, Ser208, and 229–230 (GG).

This sequence belongs to the triosephosphate isomerase family. In terms of assembly, homodimer.

The protein resides in the cytoplasm. It carries out the reaction D-glyceraldehyde 3-phosphate = dihydroxyacetone phosphate. Its pathway is carbohydrate biosynthesis; gluconeogenesis. It participates in carbohydrate degradation; glycolysis; D-glyceraldehyde 3-phosphate from glycerone phosphate: step 1/1. Its function is as follows. Involved in the gluconeogenesis. Catalyzes stereospecifically the conversion of dihydroxyacetone phosphate (DHAP) to D-glyceraldehyde-3-phosphate (G3P). This chain is Triosephosphate isomerase, found in Jannaschia sp. (strain CCS1).